Here is a 557-residue protein sequence, read N- to C-terminus: Aerobic glycerol-3-phosphate dehydrogenase (557 aa).

21-49 is a binding site for FAD; sequence DVVIVGGGITGAGIALDASNRGMKVALVE.

The protein belongs to the FAD-dependent glycerol-3-phosphate dehydrogenase family. The cofactor is FAD.

It is found in the cytoplasm. It catalyses the reaction a quinone + sn-glycerol 3-phosphate = dihydroxyacetone phosphate + a quinol. The protein operates within polyol metabolism; glycerol degradation via glycerol kinase pathway; glycerone phosphate from sn-glycerol 3-phosphate (aerobic route): step 1/1. This chain is Aerobic glycerol-3-phosphate dehydrogenase (glpD), found in Staphylococcus epidermidis (strain ATCC 35984 / DSM 28319 / BCRC 17069 / CCUG 31568 / BM 3577 / RP62A).